Reading from the N-terminus, the 668-residue chain is DNA ligase (668 aa).

NAD(+) contacts are provided by residues 32-36, 81-82, and Glu-113; these read DAEYD and SL. The active-site N6-AMP-lysine intermediate is Lys-115. Residues Arg-136, Glu-173, Lys-289, and Lys-313 each contribute to the NAD(+) site. Zn(2+) contacts are provided by Cys-407, Cys-410, Cys-425, and Cys-431. The region spanning 590–668 is the BRCT domain; sequence ASEQPFAGKT…EEELQQALQG (79 aa).

The protein belongs to the NAD-dependent DNA ligase family. LigA subfamily. It depends on Mg(2+) as a cofactor. Requires Mn(2+) as cofactor.

It catalyses the reaction NAD(+) + (deoxyribonucleotide)n-3'-hydroxyl + 5'-phospho-(deoxyribonucleotide)m = (deoxyribonucleotide)n+m + AMP + beta-nicotinamide D-nucleotide.. In terms of biological role, DNA ligase that catalyzes the formation of phosphodiester linkages between 5'-phosphoryl and 3'-hydroxyl groups in double-stranded DNA using NAD as a coenzyme and as the energy source for the reaction. It is essential for DNA replication and repair of damaged DNA. This is DNA ligase from Aeromonas hydrophila subsp. hydrophila (strain ATCC 7966 / DSM 30187 / BCRC 13018 / CCUG 14551 / JCM 1027 / KCTC 2358 / NCIMB 9240 / NCTC 8049).